Reading from the N-terminus, the 644-residue chain is Exoribonuclease 2 (644 aa).

An RNB domain is found at 189–516; the sequence is RQDLTALNFV…NHRLLKAAIK (328 aa). The S1 motif domain occupies 561 to 643; the sequence is DTRFAAEIID…ETRSIIARPV (83 aa).

It belongs to the RNR ribonuclease family. RNase II subfamily.

It localises to the cytoplasm. The catalysed reaction is Exonucleolytic cleavage in the 3'- to 5'-direction to yield nucleoside 5'-phosphates.. In terms of biological role, involved in mRNA degradation. Hydrolyzes single-stranded polyribonucleotides processively in the 3' to 5' direction. The chain is Exoribonuclease 2 from Escherichia fergusonii (strain ATCC 35469 / DSM 13698 / CCUG 18766 / IAM 14443 / JCM 21226 / LMG 7866 / NBRC 102419 / NCTC 12128 / CDC 0568-73).